The sequence spans 261 residues: MAEQGPMAIAMRLRNQLQNVYKLDPLRNEEEVKIKIKDLNEHIVCYLCAGYFIDATTITECLHTFCKSCIVKYLQTSKYCPMCNIKIHETQPLLNLKLDRVMQDIVYKLVPGLQESEDKRIKEFYQSRGLERIIQPSGEESVPDNTGLPYTSFDHSKAHFYRYDEQVSLCLERQSSSFSGKDKNKLTLQQKFVRCSVRAEVRHLRKVLCHRLNVEKHQVQMLFNNESLPDHMTMKRLWLSHWFGKAQPLVLHYTIKDKRTR.

Residues 45-84 (CYLCAGYFIDATTITECLHTFCKSCIVKYLQTSKYCPMCN) form an RING-type zinc finger.

As to quaternary structure, component of a PRC1-like complex.

The protein localises to the nucleus. Its function is as follows. Component of a Polycomb group (PcG) multiprotein PRC1-like complex, a complex class required to maintain the transcriptionally repressive state of many genes, including Hox genes, throughout development. PcG PRC1 complex acts via chromatin remodeling and modification of histones; it mediates monoubiquitination of histone H2A 'Lys-119', rendering chromatin heritably changed in its expressibility. This Danio rerio (Zebrafish) protein is Polycomb group RING finger protein 1 (pcgf1).